A 289-amino-acid chain; its full sequence is uncharacterized protein (289 aa).

This is an uncharacterized protein from Escherichia coli (strain K12).